A 524-amino-acid chain; its full sequence is Cytochrome P450 4F1 (524 aa).

Residues 15-35 form a helical membrane-spanning segment; the sequence is VAFPWQTLLLFGASWILAQIL. Residues E328 and C468 each coordinate heme.

It belongs to the cytochrome P450 family. Requires heme as cofactor. In terms of tissue distribution, expressed in liver.

The protein localises to the endoplasmic reticulum membrane. It localises to the microsome membrane. The catalysed reaction is (5Z,8Z,11Z,14Z)-eicosatetraenoate + reduced [NADPH--hemoprotein reductase] + O2 = 20-hydroxy-(5Z,8Z,11Z,14Z)-eicosatetraenoate + oxidized [NADPH--hemoprotein reductase] + H2O + H(+). It carries out the reaction 5-hydroxy-(6E,8Z,11Z,14Z)-eicosatetraenoate + reduced [NADPH--hemoprotein reductase] + O2 = 5,20-dihydroxy-(6E,8Z,11Z,14Z)-eicosatetraenoate + oxidized [NADPH--hemoprotein reductase] + H2O + H(+). The enzyme catalyses 8-hydroxy-(5Z,9E,11Z,14Z)-eicosatetraenoate + reduced [NADPH--hemoprotein reductase] + O2 = 8,20-dihydroxy-(5Z,9E,11Z,14Z)-eicosatetraenoate + oxidized [NADPH--hemoprotein reductase] + H2O + H(+). It catalyses the reaction leukotriene B4 + reduced [NADPH--hemoprotein reductase] + O2 = 20-hydroxy-leukotriene B4 + oxidized [NADPH--hemoprotein reductase] + H2O + H(+). The catalysed reaction is 6-trans-leukotriene B4 + reduced [NADPH--hemoprotein reductase] + O2 = 20-hydroxy-6-trans-leukotriene B4 + oxidized [NADPH--hemoprotein reductase] + H2O + H(+). It carries out the reaction lipoxin A4 + reduced [NADPH--hemoprotein reductase] + O2 = 20-hydroxy-lipoxin A4 + oxidized [NADPH--hemoprotein reductase] + H2O + H(+). Functionally, a cytochrome P450 monooxygenase involved in the metabolism of arachidonic acid and its oxygenated derivatives. Mechanistically, uses molecular oxygen inserting one oxygen atom into a substrate, and reducing the second into a water molecule, with two electrons provided by NADPH via cytochrome P450 reductase (CPR; NADPH-ferrihemoprotein reductase). Participates in the conversion of arachidonic acid to omega-hydroxyeicosatetraenoic acid (20-HETE), a signaling molecule acting both as vasoconstrictive and natriuretic with overall effect on arterial blood pressure. May play a role in the oxidative inactivation of eicosanoids, including both pro-inflammatory and anti-inflammatory mediators such as leukotriene B4 (LTB4), lipoxin A4 (LXA4), and several HETEs. This is Cytochrome P450 4F1 from Rattus norvegicus (Rat).